A 109-amino-acid polypeptide reads, in one-letter code: uncharacterized protein (109 aa).

The interval 1–25 is disordered; sequence METKPNALTGTSLSSTSGQTTQKSI. Low complexity predominate over residues 8-22; it reads LTGTSLSSTSGQTTQ. A helical membrane pass occupies residues 42 to 62; the sequence is TFGLMAILNLALLLWTLLATL. Residues 84–109 form a disordered region; sequence TTLQKNTPSAKNGLKNTTNKHSHEDM. The span at 91–102 shows a compositional bias: polar residues; sequence PSAKNGLKNTTN.

It localises to the host membrane. This is an uncharacterized protein from Bdellovibrio phage phiMH2K (Bacteriophage phiMH2K).